A 204-amino-acid chain; its full sequence is Methylthioribulose-1-phosphate dehydratase (204 aa).

Zn(2+) is bound by residues H94 and H96.

This sequence belongs to the aldolase class II family. MtnB subfamily. Requires Zn(2+) as cofactor.

The enzyme catalyses 5-(methylsulfanyl)-D-ribulose 1-phosphate = 5-methylsulfanyl-2,3-dioxopentyl phosphate + H2O. Its pathway is amino-acid biosynthesis; L-methionine biosynthesis via salvage pathway; L-methionine from S-methyl-5-thio-alpha-D-ribose 1-phosphate: step 2/6. Its function is as follows. Catalyzes the dehydration of methylthioribulose-1-phosphate (MTRu-1-P) into 2,3-diketo-5-methylthiopentyl-1-phosphate (DK-MTP-1-P). In Cronobacter sakazakii (strain ATCC BAA-894) (Enterobacter sakazakii), this protein is Methylthioribulose-1-phosphate dehydratase.